Reading from the N-terminus, the 213-residue chain is Uridine kinase (213 aa).

An ATP-binding site is contributed by 15 to 22; sequence GASASGKS.

The protein belongs to the uridine kinase family.

It localises to the cytoplasm. It catalyses the reaction uridine + ATP = UMP + ADP + H(+). It carries out the reaction cytidine + ATP = CMP + ADP + H(+). The protein operates within pyrimidine metabolism; CTP biosynthesis via salvage pathway; CTP from cytidine: step 1/3. Its pathway is pyrimidine metabolism; UMP biosynthesis via salvage pathway; UMP from uridine: step 1/1. In Proteus mirabilis (strain HI4320), this protein is Uridine kinase.